The sequence spans 481 residues: Cobyric acid synthase (481 aa).

Residues 248–435 (NTVIAVPMLP…LHGLFHGGAF (188 aa)) form the GATase cobBQ-type domain. Cysteine 329 acts as the Nucleophile in catalysis. Histidine 427 is a catalytic residue.

The protein belongs to the CobB/CobQ family. CobQ subfamily.

Its pathway is cofactor biosynthesis; adenosylcobalamin biosynthesis. In terms of biological role, catalyzes amidations at positions B, D, E, and G on adenosylcobyrinic A,C-diamide. NH(2) groups are provided by glutamine, and one molecule of ATP is hydrogenolyzed for each amidation. The polypeptide is Cobyric acid synthase (Granulibacter bethesdensis (strain ATCC BAA-1260 / CGDNIH1)).